A 298-amino-acid chain; its full sequence is MADQLIRGTAADNGIRVVGVISTNLTEEARQRHKLSYVATAALGRTMASALLISSSMKKQEARLNLRIKGDGPLGGLLVDAGPDGTVRGYVQNPGVELPPNAKGKLDVGGAVGKGFLYAVKDFGRGYPYSSTVELVSGEIGDDVTHYLATSEQTPSALLVGVFVGAEGVTAAGGILLQILPKAARDESLVAKLESRLGQLSGFTPLLQQGKSLHDIFQDLLGDEDLNIFPETQMVRFDCGCTFERMMGALKMLGQDELLDMIEKDGGAEATCNFCNEVYHADVDHLSRLVEELKADAH.

Intrachain disulfides connect C239–C241 and C272–C275.

This sequence belongs to the HSP33 family. Under oxidizing conditions two disulfide bonds are formed involving the reactive cysteines. Under reducing conditions zinc is bound to the reactive cysteines and the protein is inactive.

It is found in the cytoplasm. Its function is as follows. Redox regulated molecular chaperone. Protects both thermally unfolding and oxidatively damaged proteins from irreversible aggregation. Plays an important role in the bacterial defense system toward oxidative stress. The chain is 33 kDa chaperonin from Picosynechococcus sp. (strain ATCC 27264 / PCC 7002 / PR-6) (Agmenellum quadruplicatum).